Reading from the N-terminus, the 274-residue chain is Triosephosphate isomerase (274 aa).

13–15 is a binding site for substrate; the sequence is NWK. Histidine 98 functions as the Electrophile in the catalytic mechanism. Glutamate 170 (proton acceptor) is an active-site residue. Substrate is bound by residues glycine 176 and serine 216.

It belongs to the triosephosphate isomerase family. Homodimer.

It localises to the cytoplasm. The enzyme catalyses D-glyceraldehyde 3-phosphate = dihydroxyacetone phosphate. The protein operates within carbohydrate biosynthesis; gluconeogenesis. It functions in the pathway carbohydrate degradation; glycolysis; D-glyceraldehyde 3-phosphate from glycerone phosphate: step 1/1. Its function is as follows. Involved in the gluconeogenesis. Catalyzes stereospecifically the conversion of dihydroxyacetone phosphate (DHAP) to D-glyceraldehyde-3-phosphate (G3P). In Aster yellows witches'-broom phytoplasma (strain AYWB), this protein is Triosephosphate isomerase.